A 351-amino-acid polypeptide reads, in one-letter code: MLKNDLFLRALKRQSTPRTPIWVMRQAGRYLPEYRAVREKTDFLTLCKTPELACEVTIQPVDLMGVDAAIIFSDILVVNEAMGMDVQIIESKGIKLTPEIRSQADIDKLIDPDVEEKLGYVFDAIRLTKKELNDRVPLIGFSGAAWTLFTYAVEGGGSKNYANAKKMMYREPQMAHQLLQKITTCISNYLIKQVEAGADAIQIFDSWASALSEDDYREFALPYIKQNVAAVKAAYPEVPVIVFAKDMNTILSDVADTGADAVGLGWNIDIAKARKELNDRVCLQGNMDPTVLYGTPEKIKSEAAKILKQFGQHTDCSGHVFNLGHGILPDVDPANLKCLVEFVKEESAKYH.

Substrate contacts are provided by residues 25–29 (RQAGR), Asp74, Tyr151, Ser206, and His325.

This sequence belongs to the uroporphyrinogen decarboxylase family. In terms of assembly, homodimer.

It is found in the cytoplasm. It carries out the reaction uroporphyrinogen III + 4 H(+) = coproporphyrinogen III + 4 CO2. It functions in the pathway porphyrin-containing compound metabolism; protoporphyrin-IX biosynthesis; coproporphyrinogen-III from 5-aminolevulinate: step 4/4. Its function is as follows. Catalyzes the decarboxylation of four acetate groups of uroporphyrinogen-III to yield coproporphyrinogen-III. The chain is Uroporphyrinogen decarboxylase from Chlorobaculum parvum (strain DSM 263 / NCIMB 8327) (Chlorobium vibrioforme subsp. thiosulfatophilum).